The sequence spans 315 residues: Methionyl-tRNA formyltransferase (315 aa).

Residues 2–189 (SDSLRIIFAG…LITTLKQLAD (188 aa)) are N-terminal domain. 113–116 (SLLP) is a (6S)-5,6,7,8-tetrahydrofolate binding site. The C-terminal domain stretch occupies residues 210 to 315 (KEEARIDWSL…EWFIPGNRLA (106 aa)).

Belongs to the Fmt family.

The catalysed reaction is L-methionyl-tRNA(fMet) + (6R)-10-formyltetrahydrofolate = N-formyl-L-methionyl-tRNA(fMet) + (6S)-5,6,7,8-tetrahydrofolate + H(+). In terms of biological role, attaches a formyl group to the free amino group of methionyl-tRNA(fMet). The formyl group appears to play a dual role in the initiator identity of N-formylmethionyl-tRNA by promoting its recognition by IF2 and preventing the misappropriation of this tRNA by the elongation apparatus. The polypeptide is Methionyl-tRNA formyltransferase (Salmonella choleraesuis (strain SC-B67)).